The primary structure comprises 275 residues: MKKYKMVINIDMLRLFLPLLGGSVSGSLFGRFLGSEGSAIMITTCVSFCALVVFIFGLFYFRKKGPLKRILYLFLVGFVLSLIRIKVVYLLGGQALPLLDPILMYAVGAGALLGPNGAESSATWEEDSFELDVLGESFSSSKTDMDSQVAEAPQTEEGEPSVNQVPQEAGASHRVGPYQDQGLATDRNGNPIDLNDSLPPSSLLYGEIESSASVRARDLELEKDIKRVQRLTRNFDNAEDPARRLEVAARLDPEVRELDQKWALFQEKDASGLGR.

Transmembrane regions (helical) follow at residues 15–35 (LFLP…FLGS), 39–59 (AIMI…FGLF), and 70–90 (ILYL…VVYL). Positions 140 to 191 (SSKTDMDSQVAEAPQTEEGEPSVNQVPQEAGASHRVGPYQDQGLATDRNGNP) are disordered.

The protein resides in the mitochondrion membrane. This is an uncharacterized protein from Arabidopsis thaliana (Mouse-ear cress).